The sequence spans 515 residues: Bifunctional purine biosynthesis protein PurH (515 aa).

The MGS-like domain occupies 1 to 145; sequence MTKRVLISVS…KNHASVTVVV (145 aa).

It belongs to the PurH family.

The enzyme catalyses (6R)-10-formyltetrahydrofolate + 5-amino-1-(5-phospho-beta-D-ribosyl)imidazole-4-carboxamide = 5-formamido-1-(5-phospho-D-ribosyl)imidazole-4-carboxamide + (6S)-5,6,7,8-tetrahydrofolate. The catalysed reaction is IMP + H2O = 5-formamido-1-(5-phospho-D-ribosyl)imidazole-4-carboxamide. The protein operates within purine metabolism; IMP biosynthesis via de novo pathway; 5-formamido-1-(5-phospho-D-ribosyl)imidazole-4-carboxamide from 5-amino-1-(5-phospho-D-ribosyl)imidazole-4-carboxamide (10-formyl THF route): step 1/1. It functions in the pathway purine metabolism; IMP biosynthesis via de novo pathway; IMP from 5-formamido-1-(5-phospho-D-ribosyl)imidazole-4-carboxamide: step 1/1. In Streptococcus pneumoniae (strain P1031), this protein is Bifunctional purine biosynthesis protein PurH.